Reading from the N-terminus, the 456-residue chain is Shootin-1 (456 aa).

Met1 carries the N-acetylmethionine modification. Phosphoserine is present on residues Ser3 and Ser4. A coiled-coil region spans residues Glu7–Pro353. Ser101 and Ser249 each carry phosphoserine; by PAK1. Disordered stretches follow at residues Lys343–Leu405 and Lys418–Ala445. The span at Val352–Pro369 shows a compositional bias: pro residues. Ser375 is subject to Phosphoserine.

This sequence belongs to the shootin family. Interacts with L1CAM; this interaction occurs in axonal growth cones. Interacts with actin filament retrograde flow; this interaction is enhanced in a netrin-1- and PAK1-dependent manner and promotes F-actin-substrate coupling and concomitant formation of traction forces at axonal growth cones. Interacts with RUFY3. Interacts with PFN2. Interacts (via N-terminus) with KIF20B; this interaction is direct and promotes the association of SHTN1 to microtubules in primary neurons. Associates with microtubule. In terms of processing, phosphorylated on Ser-101 and Ser-249 by PAK1 through a CDC42- and RAC1-dependent signaling pathway, which enhances its association with F-actin retrograde flow in filopodia and lamellipodia of axonal growth cones. Phosphorylation on Ser-101 and Ser-249 is increased by netrin-1.

It is found in the perikaryon. Its subcellular location is the cell projection. It localises to the axon. The protein resides in the growth cone. The protein localises to the cytoplasm. It is found in the cytoskeleton. Its subcellular location is the filopodium. It localises to the lamellipodium. In terms of biological role, involved in the generation of internal asymmetric signals required for neuronal polarization and neurite outgrowth. Mediates netrin-1-induced F-actin-substrate coupling or 'clutch engagement' within the axon growth cone through activation of CDC42, RAC1 and PAK1-dependent signaling pathway, thereby converting the F-actin retrograde flow into traction forces, concomitantly with filopodium extension and axon outgrowth. Plays a role in cytoskeletal organization by regulating the subcellular localization of phosphoinositide 3-kinase (PI3K) activity at the axonal growth cone. Also plays a role in regenerative neurite outgrowth. In the developing cortex, cooperates with KIF20B to promote both the transition from the multipolar to the bipolar stage and the radial migration of cortical neurons from the ventricular zone toward the superficial layer of the neocortex. Involved in the accumulation of phosphatidylinositol 3,4,5-trisphosphate (PIP3) in the growth cone of primary hippocampal neurons. The sequence is that of Shootin-1 from Pongo abelii (Sumatran orangutan).